Consider the following 185-residue polypeptide: ATP-dependent protease subunit HslV (185 aa).

Thr13 is a catalytic residue. Gly167, Cys170, and Thr173 together coordinate Na(+).

The protein belongs to the peptidase T1B family. HslV subfamily. As to quaternary structure, a double ring-shaped homohexamer of HslV is capped on each side by a ring-shaped HslU homohexamer. The assembly of the HslU/HslV complex is dependent on binding of ATP.

It localises to the cytoplasm. It catalyses the reaction ATP-dependent cleavage of peptide bonds with broad specificity.. Allosterically activated by HslU binding. Functionally, protease subunit of a proteasome-like degradation complex believed to be a general protein degrading machinery. In Sinorhizobium fredii (strain NBRC 101917 / NGR234), this protein is ATP-dependent protease subunit HslV.